The primary structure comprises 280 residues: 2-dehydro-3-deoxyphosphooctonate aldolase (280 aa).

Belongs to the KdsA family.

Its subcellular location is the cytoplasm. It catalyses the reaction D-arabinose 5-phosphate + phosphoenolpyruvate + H2O = 3-deoxy-alpha-D-manno-2-octulosonate-8-phosphate + phosphate. It participates in carbohydrate biosynthesis; 3-deoxy-D-manno-octulosonate biosynthesis; 3-deoxy-D-manno-octulosonate from D-ribulose 5-phosphate: step 2/3. The protein operates within bacterial outer membrane biogenesis; lipopolysaccharide biosynthesis. This Nitrosococcus oceani (strain ATCC 19707 / BCRC 17464 / JCM 30415 / NCIMB 11848 / C-107) protein is 2-dehydro-3-deoxyphosphooctonate aldolase.